A 1077-amino-acid polypeptide reads, in one-letter code: Serine/threonine-protein kinase sel-5 (1077 aa).

Residues 47–317 form the Protein kinase domain; the sequence is VTIEKQIAEG…IYQTSVLAFE (271 aa). ATP-binding positions include 53–61 and lysine 75; that span reads IAEGGFAIV. The active-site Proton acceptor is aspartate 178. Disordered stretches follow at residues 347-444, 488-554, 616-813, and 920-1077; these read MRDG…TDGS, GFTD…SQVV, ELDS…TNPF, and LISV…PTDL. A compositionally biased stretch (polar residues) spans 369-399; that stretch reads IQSSSKMASLSQQVPSISNISMPSGSGTVET. Residues 491-515 are compositionally biased toward basic and acidic residues; the sequence is DLDKPALPRDRAQTDGKRRLPHESD. Low complexity predominate over residues 541–554; it reads SSQQTTSKTSSQVV. A compositionally biased stretch (polar residues) spans 638–648; it reads LTVSTSSSAQP. Acidic residues predominate over residues 655–679; sequence TDEDDERQLLSETDEEEKYEIDEKE. Composition is skewed to basic and acidic residues over residues 697-708 and 739-751; these read DEQRMNDRRRYS and DSRR…HDED. A compositionally biased stretch (acidic residues) spans 770 to 780; the sequence is EDDGLEDDDDH. Residues 799 to 810 show a composition bias toward polar residues; it reads GTSTPHTQNPIT. Positions 927 to 936 are enriched in pro residues; sequence TDPPPPPLPK. Over residues 941-950 the composition is skewed to polar residues; that stretch reads ASPTQETTAT. Over residues 960-969 the composition is skewed to basic residues; the sequence is KLLKKEKKKE. Residues 970-989 are compositionally biased toward basic and acidic residues; the sequence is KKDGKKDKLKLEEYREKGSS. Polar residues predominate over residues 1054 to 1067; it reads LTGKNASFVNTSFQ.

The protein belongs to the protein kinase superfamily. Ser/Thr protein kinase family. Mg(2+) is required as a cofactor.

It localises to the cytoplasm. It catalyses the reaction L-seryl-[protein] + ATP = O-phospho-L-seryl-[protein] + ADP + H(+). The catalysed reaction is L-threonyl-[protein] + ATP = O-phospho-L-threonyl-[protein] + ADP + H(+). Functionally, serine/threonine-protein kinase which may play a role in lin-12-mediated cell-fate decisions. In Caenorhabditis elegans, this protein is Serine/threonine-protein kinase sel-5.